Consider the following 182-residue polypeptide: Early nodulin-like protein 14 (182 aa).

An N-terminal signal peptide occupies residues 1–28 (MFLSASMASSSLHVAIFSLIFLFSLAAA). The Phytocyanin domain maps to 29 to 133 (NEVTVGGKSG…GQKLSLVVIS (105 aa)). The cysteines at positions 87 and 121 are disulfide-linked. N-linked (GlcNAc...) asparagine glycosylation is found at N88 and N95. The GPI-anchor amidated serine moiety is linked to residue S160. A propeptide spans 161 to 182 (GSVRLGGCYVVLGLVLGLCAWF) (removed in mature form).

This sequence belongs to the early nodulin-like (ENODL) family. As to quaternary structure, interacts strongly and specifically with the extracellular domain of FERONIA at the synergid cell surface. As to expression, mostly expressed in seedlings and flowers, and, to a lower extent, in roots, stems and seeds, but barely in leaves.

The protein localises to the cell membrane. May act as a carbohydrate transporter. Required, together with ENODL11, ENODL12, ENODL13, ENODL14 and ENODL15, for male-female communication and pollen tube reception and burst at the synergid cell surface of the female gametophyte. The sequence is that of Early nodulin-like protein 14 from Arabidopsis thaliana (Mouse-ear cress).